We begin with the raw amino-acid sequence, 108 residues long: N(4)-acetylcytidine amidohydrolase (108 aa).

The 98-residue stretch at 5-102 (ITFFQRLERS…NDLFFISFRV (98 aa)) folds into the ASCH domain. The active-site Proton acceptor is lysine 20. Threonine 23 acts as the Nucleophile in catalysis. Glutamate 73 serves as the catalytic Proton donor.

It belongs to the N(4)-acetylcytidine amidohydrolase family.

The enzyme catalyses N(4)-acetylcytidine + H2O = cytidine + acetate + H(+). It carries out the reaction N(4)-acetyl-2'-deoxycytidine + H2O = 2'-deoxycytidine + acetate + H(+). The catalysed reaction is N(4)-acetylcytosine + H2O = cytosine + acetate + H(+). Catalyzes the hydrolysis of N(4)-acetylcytidine (ac4C). The chain is N(4)-acetylcytidine amidohydrolase from Moritella marina (Vibrio marinus).